The chain runs to 7126 residues: Replicase polyprotein 1ab (7126 aa).

The CoV Nsp1 globular domain occupies 25–151 (RSDHVACTVP…EHTFLLRKNG (127 aa)). The 29-residue stretch at 167 to 195 (TPYVEILDDLEADPTGKYSQNLLKKLIGG) folds into the BetaCoV Nsp1 C-terminal domain. A CoV Nsp2 N-terminal domain is found at 197-472 (CIPVDQYMCG…WDKVVETANL (276 aa)). Zn(2+)-binding residues include cysteine 339, cysteine 342, cysteine 358, and cysteine 360. The C4 stretch occupies residues 339-360 (CNACGRGTWCTGNAIQGFACDC). In terms of domain architecture, CoV Nsp2 middle spans 478–712 (QHSLNFCQQF…LDIMSKAMKL (235 aa)). Residues 714–847 (HTNVSWAGTK…VSTLFRLKGG (134 aa)) enclose the CoV Nsp2 C-terminal domain. In terms of domain architecture, Ubiquitin-like 1 spans 851 to 960 (KKVTFGDVNT…MTFSINPVED (110 aa)). The segment at 1039-1061 (AQEPSVESTDSTPSTSTVVSEND) is disordered. Low complexity predominate over residues 1041-1059 (EPSVESTDSTPSTSTVVSE). 2 consecutive Macro domains span residues 1159–1328 (DLSK…KPDG) and 1329–1453 (LVYS…AIQT). The 74-residue stretch at 1453–1526 (TPETAFINNV…LEACRAYLTS (74 aa)) folds into the DPUP domain. The region spanning 1531–1586 (QVNIEVLVTIDGVNFRTVILNDATTFRKQLGATFYKGVDISDALPTVKMGGESLFV) is the Ubiquitin-like 2 domain. A Peptidase C16 domain is found at 1600–1871 (EYYGTSDVTF…KVEVNPDLSN (272 aa)). Cysteine 1641 functions as the For PL-PRO activity in the catalytic mechanism. Zn(2+) is bound by residues cysteine 1721, cysteine 1724, cysteine 1756, and cysteine 1758. The C4-type zinc finger occupies 1721-1758 (CTVCGIRDIEYTGMRACVYAGVNSMEELQSVFNETCVC). Active-site for PL-PRO activity residues include histidine 1807 and aspartate 1822. A Nucleic acid-binding domain is found at 1885-2002 (TIKYSPATIL…QLYDVAPIVL (118 aa)). In terms of domain architecture, G2M spans 2019 to 2140 (PNVPVVEDVS…AKITVTATTA (122 aa)). Transmembrane regions (helical) follow at residues 2119–2139 (VLLGASSLFASFAKITVTATT), 2152–2172 (FVVNYGVLQNMFLFLKMLFFL), and 2229–2249 (LFLLLCTTILLLSSIYHLVIF). Positions 2119–2402 (VLLGASSLFA…VTHIPLHGLV (284 aa)) are HD1. Residues 2266–2332 (LAMYKEVRSY…LQMLQTHITS (67 aa)) form the 3Ecto domain. 2 disulfides stabilise this stretch: cysteine 2282–cysteine 2310 and cysteine 2300–cysteine 2307. 3 helical membrane-spanning segments follow: residues 2333-2353 (YVLNIDWIWFALEFFLAYVLY), 2357-2377 (FNVLLLVVTAQYFFAYTSAFV), and 2382-2402 (YNYIVSGLFFLVTHIPLHGLV). The tract at residues 2416-2506 (KFYSHVINGC…TLRRLIKPTD (91 aa)) is Y1. A CoV Nsp3 Y domain is found at 2416-2789 (KFYSHVINGC…LSVKFSATKI (374 aa)). Positions 2420, 2425, 2430, 2433, 2466, 2469, 2473, and 2476 each coordinate Zn(2+). The interval 2420-2433 (HVINGCKDTACLLC) is ZF1. Positions 2466–2476 (CCKHNWNCVEC) are ZF2. Residues 2507-2605 (QSHYYVDSVV…LVDVNLVTTV (99 aa)) are Y2. Residues 2507-2789 (QSHYYVDSVV…LSVKFSATKI (283 aa)) are coV-Y. The tract at residues 2606–2688 (GDSREIAIKM…DALQYAHKND (83 aa)) is Y3. Residues 2689–2789 (IQLTTECYNN…LSVKFSATKI (101 aa)) are Y4. The next 4 helical transmembrane spans lie at 2807–2827 (GYCILTLFVFTVAVLSWFCLP), 3079–3099 (STSLAMGLVLCVFLTAAFYYI), 3112–3132 (CAVVAVVAALLNSLCLCFIVA), and 3156–3176 (AFIMHISWYVMFGTVVPIWML). The tract at residues 2807 to 3176 (GYCILTLFVF…FGTVVPIWML (370 aa)) is HD2. One can recognise a Nsp4C domain in the interval 3202–3298 (VFTDGKLNCS…NCSVTSSVLQ (97 aa)). The Peptidase C30 domain maps to 3299–3604 (SGLVKMSAPS…NMQVMGVVMQ (306 aa)). Active-site for 3CL-PRO activity residues include histidine 3339 and cysteine 3446. A run of 7 helical transmembrane segments spans residues 3610-3630 (ISYGFMHWLMSTLVLAYVSVM), 3644-3664 (TIPTQMTPLLFGFMACVMFTV), 3669-3689 (TFLSLFLLPVALCLTYANIVY), 3714-3734 (RTTHLDFGLYISLSFVLAIIV), 3742-3762 (MSNLALALCSGVMWFYTYVIG), 3791-3811 (LAKFISGLVFLYAPHLGFILP), and 3815-3835 (LVLLIYLCLGYMCTMYFGVFS). The HD3 stretch occupies residues 3610–3835 (ISYGFMHWLM…MCTMYFGVFS (226 aa)). One can recognise a RdRp Nsp7 cofactor domain in the interval 3897–3979 (SKLTDLKCTS…DLFENSSVLQ (83 aa)). Residues 3980–4178 (ATLTEFSHLA…RASSSAVKLQ (199 aa)) form the RdRp Nsp8 cofactor domain. The 110-residue stretch at 4179-4288 (NNEIHPKGLK…GHIAATVRLQ (110 aa)) folds into the Nsp9 ssRNA-binding domain. The ExoN/MTase coactivator domain occupies 4289 to 4427 (AGANTEFASN…DALRNNTVPQ (139 aa)). Cysteine 4362, cysteine 4365, histidine 4371, cysteine 4378, cysteine 4404, cysteine 4407, cysteine 4415, and cysteine 4417 together coordinate Zn(2+). Zinc fingers lie at residues 4362-4378 (CLYCRAHIEHPDVSGVC) and 4404-4417 (CNVCQYWVGYGCNC). In terms of domain architecture, NiRAN spans 4433 to 4690 (FLNRVRGSSV…AAETHKDCDF (258 aa)). Mn(2+) contacts are provided by asparagine 4638 and aspartate 4647. In terms of domain architecture, Nsp12 Interface spans 4695–4793 (IEWLLLEYDY…MNMDVNIHRH (99 aa)). Histidine 4724, cysteine 4730, cysteine 4735, cysteine 4739, and cysteine 4916 together coordinate Zn(2+). In terms of domain architecture, Nsp12 RNA-dependent RNA polymerase spans 4794–5361 (RLALKELMMY…DLYSSPTTLQ (568 aa)). Residues 4796-5010 (ALKELMMYAA…HQKMLKSMAA (215 aa)) are rdRp Fingers N-ter. The interval 5011 to 5049 (TRGATCVIGTTKFYGGWDFMLKTLYKDVESPHLMGWDYP) is rdRp Palm N-ter. The RdRp catalytic domain occupies 5041-5203 (PHLMGWDYPK…CYNSDYAAKG (163 aa)). Positions 5050–5108 (KCDRAMPNMCRILASLILARKHSTCCTNSDRFYRLANECAQVLSEYVLCGGGYYVKPGG) are rdRp Fingers C-ter. Positions 5071, 5074, and 5075 each coordinate Zn(2+). The rdRp Palm C-ter stretch occupies residues 5109–5244 (TSSGDATTAY…EKGPHEFCSQ (136 aa)). Residues serine 5188, aspartate 5189, and aspartate 5190 contribute to the active site. Residues 5245-5361 (HTLYIKDGDD…DLYSSPTTLQ (117 aa)) form a rdRp Thumb region. A CV ZBD domain is found at 5362–5474 (AVGSCVVCHS…MEFNRLATCD (113 aa)). Zn(2+)-binding residues include cysteine 5366, cysteine 5369, cysteine 5377, cysteine 5380, cysteine 5387, cysteine 5390, histidine 5394, histidine 5400, cysteine 5411, cysteine 5416, cysteine 5433, and histidine 5436. Positions 5618-5799 (TVPEEFANHV…MCNLGPDIFL (182 aa)) constitute a (+)RNA virus helicase ATP-binding domain. 5643-5650 (GPPGTGKS) provides a ligand contact to ATP. One can recognise a (+)RNA virus helicase C-terminal domain in the interval 5800–5974 (SVCYRCPKEI…GLFKDCSRED (175 aa)). In terms of domain architecture, ExoN spans 6031-6246 (LFITRDEAIR…RCLAIYDCFI (216 aa)). Catalysis depends on residues aspartate 6049, glutamate 6051, and glutamate 6150. Residues cysteine 6166, cysteine 6169, cysteine 6185, histidine 6188, histidine 6216, cysteine 6220, and histidine 6223 each coordinate Zn(2+). Active-site residues include histidine 6227 and aspartate 6232. Cysteine 6238 contributes to the Zn(2+) binding site. An N7-MTase domain is found at 6255 to 6482 (YPYISHEQKL…NLWSTFVKVQ (228 aa)). 6290-6296 (DIGNPKG) contributes to the S-adenosyl-L-methionine binding site. Residues 6368 to 6382 (CNGGSLYVNKHAFHT) form a gpppA-binding region. Zn(2+) contacts are provided by cysteine 6406, cysteine 6428, cysteine 6439, and histidine 6442. Residues 6483 to 6543 (GLENIAFNVI…NVAFELYAKR (61 aa)) enclose the Nsp15 N-terminal oligomerization domain. Residues 6544-6665 (AVRSHPDLNL…LYKKVNNEFV (122 aa)) enclose the AV-Nsp11N/CoV-Nsp15M domain. The 140-residue stretch at 6682 to 6821 (TALTPMEEDF…KDGKVQTFYP (140 aa)) folds into the NendoU domain. Residues histidine 6712, histidine 6727, lysine 6767, lysine 6870, aspartate 6954, lysine 6994, and glutamate 7027 contribute to the active site. The 295-residue stretch at 6826-7120 (TNDWKPGLTM…TLNVSTDVLV (295 aa)) folds into the Nidovirus-type SAM-dependent 2'-O-MTase domain.

This sequence belongs to the coronaviruses polyprotein 1ab family. In terms of assembly, interacts with host PHB and PHB2. Interacts with papain-like protease nsp3 and non-structural protein 6. As to quaternary structure, monomer. Homodimer. Only the homodimer shows catalytic activity. In terms of assembly, interacts with nsp8 and nsp12 to form the replication-transcription complex (RTC): nsp12, nsp7, two subunits of nsp8, and up to two subunits of nsp13. Interacts with nsp7, nsp13 and nsp12 to form the replication-transcription complex (RTC): nsp12, nsp7, two subunits of nsp8, and up to two subunits of nsp13. As to quaternary structure, interacts with nsp12. In terms of assembly, interacts with proofreading exoribonuclease nsp14 and 2'-O-methyltransferase nsp16; these interactions enhance nsp14 and nsp16 enzymatic activities. Interacts with nsp7 and nsp8 to form the replication-transcription complex (RTC): nsp12, nsp7, two subunits of nsp8, and up to two subunits of nsp13. Interacts with nsp9. As to quaternary structure, interacts with nsp8 to form the replication-transcription complex (RTC): nsp12, nsp7, two subunits of nsp8, and up to two subunits of nsp13. It depends on Mn(2+) as a cofactor. Mg(2+) serves as cofactor. In terms of processing, specific enzymatic cleavages in vivo by its own proteases yield mature proteins. 3CL-PRO and PL-PRO proteinases are autocatalytically processed.

The protein resides in the host membrane. It is found in the host cytoplasm. It localises to the host perinuclear region. Its subcellular location is the host endoplasmic reticulum-Golgi intermediate compartment. It catalyses the reaction ATP + H2O = ADP + phosphate + H(+). It carries out the reaction RNA(n) + a ribonucleoside 5'-triphosphate = RNA(n+1) + diphosphate. The catalysed reaction is Thiol-dependent hydrolysis of ester, thioester, amide, peptide and isopeptide bonds formed by the C-terminal Gly of ubiquitin (a 76-residue protein attached to proteins as an intracellular targeting signal).. The enzyme catalyses a 5'-end (N(7)-methyl 5'-triphosphoguanosine)-ribonucleoside in mRNA + S-adenosyl-L-methionine = a 5'-end (N(7)-methyl 5'-triphosphoguanosine)-(2'-O-methyl-ribonucleoside) in mRNA + S-adenosyl-L-homocysteine + H(+). It catalyses the reaction uridylyl-uridylyl-ribonucleotide-RNA = a 3'-end uridylyl-2',3'-cyclophospho-uridine-RNA + a 5'-end dephospho-ribonucleoside-RNA. It carries out the reaction a 5'-end diphospho-ribonucleoside in mRNA + GTP + H(+) = a 5'-end (5'-triphosphoguanosine)-ribonucleoside in mRNA + diphosphate. The catalysed reaction is a 5'-end (5'-triphosphoguanosine)-ribonucleoside in mRNA + S-adenosyl-L-methionine = a 5'-end (N(7)-methyl 5'-triphosphoguanosine)-ribonucleoside in mRNA + S-adenosyl-L-homocysteine. In terms of biological role, the replicase polyprotein of coronaviruses is a multifunctional protein: it contains the activities necessary for the transcription of negative stranded RNA, leader RNA, subgenomic mRNAs and progeny virion RNA as well as proteinases responsible for the cleavage of the polyprotein into functional products. Functionally, inhibits host translation by interacting with the 40S ribosomal subunit. The nsp1-40S ribosome complex further induces an endonucleolytic cleavage near the 5'UTR of host mRNAs, targeting them for degradation. Viral mRNAs are not susceptible to nsp1-mediated endonucleolytic RNA cleavage thanks to the presence of a 5'-end leader sequence and are therefore protected from degradation. By suppressing host gene expression, nsp1 facilitates efficient viral gene expression in infected cells and evasion from host immune response. Its function is as follows. May play a role in the modulation of host cell survival signaling pathway by interacting with host PHB and PHB2. Indeed, these two proteins play a role in maintaining the functional integrity of the mitochondria and protecting cells from various stresses. Responsible for the cleavages located at the N-terminus of the replicase polyprotein. In addition, PL-PRO possesses a deubiquitinating/deISGylating activity and processes both 'Lys-48'- and 'Lys-63'-linked polyubiquitin chains from cellular substrates. Participates together with nsp4 in the assembly of virally-induced cytoplasmic double-membrane vesicles necessary for viral replication. Antagonizes innate immune induction of type I interferon by blocking the phosphorylation, dimerization and subsequent nuclear translocation of host IRF3. Also prevents host NF-kappa-B signaling. In terms of biological role, participates in the assembly of virally-induced cytoplasmic double-membrane vesicles necessary for viral replication. Functionally, cleaves the C-terminus of replicase polyprotein at 11 sites. Recognizes substrates containing the core sequence [ILMVF]-Q-|-[SGACN]. Also able to bind an ADP-ribose-1''-phosphate (ADRP). Its function is as follows. Plays a role in the initial induction of autophagosomes from host endoplasmic reticulum. Later, limits the expansion of these phagosomes that are no longer able to deliver viral components to lysosomes. Forms a hexadecamer with nsp8 (8 subunits of each) that may participate in viral replication by acting as a primase. Alternatively, may synthesize substantially longer products than oligonucleotide primers. In terms of biological role, forms a hexadecamer with nsp7 (8 subunits of each) that may participate in viral replication by acting as a primase. Alternatively, may synthesize substantially longer products than oligonucleotide primers. Functionally, forms a primer, NSP9-pU, which is utilized by the polymerase for the initiation of RNA chains. Interacts with ribosome signal recognition particle RNA (SRP). Together with NSP8, suppress protein integration into the cell membrane, thereby disrupting host immune defenses. Its function is as follows. Plays a pivotal role in viral transcription by stimulating both nsp14 3'-5' exoribonuclease and nsp16 2'-O-methyltransferase activities. Therefore plays an essential role in viral mRNAs cap methylation. RNA-directed RNA polymerase that catalyzes the transcription of viral genomic and subgenomic RNAs. Acts in complex with nsp7 and nsp8 to transcribe both the minus and positive strands of genomic RNA. The kinase-like NiRAN domain of NSP12 attaches one or more nucleotides to the amino terminus of NSP9, forming a covalent RNA-protein intermediate that serves as transcription/replication primer. Subgenomic RNAs (sgRNAs) are formed by discontinuous transcription: The polymerase has the ability to pause at transcription-regulating sequences (TRS) and jump to the leader TRS, resulting in a major deletion. This creates a series of subgenomic RNAs that are replicated, transcribed and translated. In addition, Nsp12 is a subunit of the viral RNA capping enzyme that catalyzes the RNA guanylyltransferase reaction for genomic and sub-genomic RNAs. Subsequently, the NiRAN domain transfers RNA to GDP, and forms the core cap structure GpppA-RNA. In terms of biological role, multi-functional protein with a zinc-binding domain in N-terminus displaying RNA and DNA duplex-unwinding activities with 5' to 3' polarity. Activity of helicase is dependent on magnesium. Functionally, plays a role in viral RNA synthesis through two distinct activities. The N7-guanine methyltransferase activity plays a role in the formation of the cap structure GpppA-RNA. The proofreading exoribonuclease reduces the sensitivity of the virus to RNA mutagens during replication. This activity acts on both ssRNA and dsRNA in a 3'-5' direction. Its function is as follows. Plays a role in viral transcription/replication and prevents the simultaneous activation of host cell dsRNA sensors, such as MDA5/IFIH1, OAS, and PKR. Acts by degrading the 5'-polyuridines generated during replication of the poly(A) region of viral genomic and subgenomic RNAs. Catalyzes a two-step reaction in which a 2'3'-cyclic phosphate (2'3'-cP) is first generated by 2'-O transesterification, which is then hydrolyzed to a 3'-phosphate (3'-P). If not degraded, poly(U) RNA would hybridize with poly(A) RNA tails and activate host dsRNA sensors. Methyltransferase that mediates mRNA cap 2'-O-ribose methylation to the 5'-cap structure of viral mRNAs. N7-methyl guanosine cap is a prerequisite for binding of nsp16. Therefore plays an essential role in viral mRNAs cap methylation which is essential to evade immune system. In Bat coronavirus 133/2005 (BtCoV), this protein is Replicase polyprotein 1ab (rep).